Reading from the N-terminus, the 654-residue chain is Interferon-induced GTP-binding protein Mx1 (654 aa).

At Met1 the chain carries N-acetylmethionine. Composition is skewed to basic and acidic residues over residues 1 to 12 (MVLSDLDIKEPD) and 23 to 32 (DMVREHETES). The interval 1–33 (MVLSDLDIKEPDSPESGLNGSDDMVREHETESK) is disordered. A Dynamin-type G domain is found at 62 to 335 (DLALPAIAVI…LIMHICKTLP (274 aa)). Residues 72-79 (GDQSSGKS) form a G1 motif region. Residue 72–79 (GDQSSGKS) coordinates GTP. A G2 motif region spans residues 97–99 (VTR). Positions 173-176 (DLPG) are G3 motif. GTP contacts are provided by residues 173–177 (DLPGI) and 242–245 (TKPD). The tract at residues 242 to 245 (TKPD) is G4 motif. Positions 274-277 (KCRG) are G5 motif. Residues 336–361 (LLENQIKETHQRITEELQKYGKDIPE) form a bundle signaling element (BSE) region. A middle domain region spans residues 361–528 (EEESEKMFSL…HFQMEQLVYC (168 aa)). A stalk region spans residues 362–624 (EESEKMFSLI…KDQYDWLLKE (263 aa)). The segment at 544–563 (EAEEEKKKKSNHYYQSEDSE) is disordered. Residues 549–552 (KKKK) form a critical for lipid-binding region. The 89-residue stretch at 566–654 (TAEIFQHLMA…ARQRLAKFPG (89 aa)) folds into the GED domain.

Belongs to the TRAFAC class dynamin-like GTPase superfamily. Dynamin/Fzo/YdjA family. In terms of assembly, homooligomer. Oligomerizes into multimeric filamentous or ring-like structures by virtue of its stalk domain. Oligomerization is critical for GTPase activity, protein stability, and recognition of viral target structures. Interacts with TRPC1, TRPC3, TRPC4, TRPC5, TRPC6 and TRPC7. Interacts with HSPA5. Interacts with DDX39A and DDX39B. Interacts with TUBB/TUBB5. Post-translationally, ISGylated.

Its subcellular location is the cytoplasm. The protein localises to the endoplasmic reticulum membrane. It localises to the perinuclear region. Functionally, interferon-induced dynamin-like GTPase with antiviral activity. The chain is Interferon-induced GTP-binding protein Mx1 (MX1) from Ovis aries (Sheep).